Reading from the N-terminus, the 118-residue chain is Holo-[acyl-carrier-protein] synthase (118 aa).

Mg(2+) is bound by residues aspartate 8 and glutamate 57.

It belongs to the P-Pant transferase superfamily. AcpS family. Requires Mg(2+) as cofactor.

The protein resides in the cytoplasm. It catalyses the reaction apo-[ACP] + CoA = holo-[ACP] + adenosine 3',5'-bisphosphate + H(+). Transfers the 4'-phosphopantetheine moiety from coenzyme A to a Ser of acyl-carrier-protein. This chain is Holo-[acyl-carrier-protein] synthase, found in Acholeplasma laidlawii (strain PG-8A).